A 62-amino-acid chain; its full sequence is Large ribosomal subunit protein bL28 (62 aa).

This sequence belongs to the bacterial ribosomal protein bL28 family.

The polypeptide is Large ribosomal subunit protein bL28 (Phytoplasma mali (strain AT)).